A 248-amino-acid polypeptide reads, in one-letter code: tRNA uridine(34) hydroxylase (248 aa).

Positions 127 to 221 constitute a Rhodanese domain; sequence RGRPLVLLDT…YFEEVGGEGY (95 aa). Cysteine 181 acts as the Cysteine persulfide intermediate in catalysis.

It belongs to the TrhO family.

The enzyme catalyses uridine(34) in tRNA + AH2 + O2 = 5-hydroxyuridine(34) in tRNA + A + H2O. In terms of biological role, catalyzes oxygen-dependent 5-hydroxyuridine (ho5U) modification at position 34 in tRNAs. In Xanthomonas euvesicatoria pv. vesicatoria (strain 85-10) (Xanthomonas campestris pv. vesicatoria), this protein is tRNA uridine(34) hydroxylase.